The following is a 106-amino-acid chain: NADH dehydrogenase [ubiquinone] 1 beta subcomplex subunit 10-B (106 aa).

The segment at 1–25 (MGRKKGLPEFEESAPDGFDPENPYK) is disordered.

Belongs to the complex I NDUFB10 subunit family. As to quaternary structure, complex I is composed of at least 49 different subunits.

It is found in the mitochondrion inner membrane. Its function is as follows. Accessory subunit of the mitochondrial membrane respiratory chain NADH dehydrogenase (Complex I), that is believed not to be involved in catalysis. Complex I functions in the transfer of electrons from NADH to the respiratory chain. The immediate electron acceptor for the enzyme is believed to be ubiquinone. The polypeptide is NADH dehydrogenase [ubiquinone] 1 beta subcomplex subunit 10-B (Arabidopsis thaliana (Mouse-ear cress)).